The primary structure comprises 140 residues: Nucleoside diphosphate kinase (140 aa).

K11, F59, R87, T93, R104, and N114 together coordinate ATP. H117 (pros-phosphohistidine intermediate) is an active-site residue.

Belongs to the NDK family. Homotetramer. The cofactor is Mg(2+).

The protein localises to the cytoplasm. The catalysed reaction is a 2'-deoxyribonucleoside 5'-diphosphate + ATP = a 2'-deoxyribonucleoside 5'-triphosphate + ADP. The enzyme catalyses a ribonucleoside 5'-diphosphate + ATP = a ribonucleoside 5'-triphosphate + ADP. Major role in the synthesis of nucleoside triphosphates other than ATP. The ATP gamma phosphate is transferred to the NDP beta phosphate via a ping-pong mechanism, using a phosphorylated active-site intermediate. This chain is Nucleoside diphosphate kinase, found in Rhizobium meliloti (strain 1021) (Ensifer meliloti).